The sequence spans 328 residues: Ketol-acid reductoisomerase (NADP(+)) (328 aa).

One can recognise a KARI N-terminal Rossmann domain in the interval 1-181 (MKIYYENDID…GLARAGVLET (181 aa)). NADP(+) is bound by residues 24–27 (YGSQ), R47, S52, and 82–85 (DEIQ). Residue H107 is part of the active site. G133 lines the NADP(+) pocket. Positions 182–327 (TFREETETDL…SKLRKLCGLE (146 aa)) constitute a KARI C-terminal knotted domain. 4 residues coordinate Mg(2+): D190, E194, E226, and E230. S251 is a binding site for substrate.

It belongs to the ketol-acid reductoisomerase family. Mg(2+) serves as cofactor.

The enzyme catalyses (2R)-2,3-dihydroxy-3-methylbutanoate + NADP(+) = (2S)-2-acetolactate + NADPH + H(+). It carries out the reaction (2R,3R)-2,3-dihydroxy-3-methylpentanoate + NADP(+) = (S)-2-ethyl-2-hydroxy-3-oxobutanoate + NADPH + H(+). It functions in the pathway amino-acid biosynthesis; L-isoleucine biosynthesis; L-isoleucine from 2-oxobutanoate: step 2/4. It participates in amino-acid biosynthesis; L-valine biosynthesis; L-valine from pyruvate: step 2/4. Functionally, involved in the biosynthesis of branched-chain amino acids (BCAA). Catalyzes an alkyl-migration followed by a ketol-acid reduction of (S)-2-acetolactate (S2AL) to yield (R)-2,3-dihydroxy-isovalerate. In the isomerase reaction, S2AL is rearranged via a Mg-dependent methyl migration to produce 3-hydroxy-3-methyl-2-ketobutyrate (HMKB). In the reductase reaction, this 2-ketoacid undergoes a metal-dependent reduction by NADPH to yield (R)-2,3-dihydroxy-isovalerate. The sequence is that of Ketol-acid reductoisomerase (NADP(+)) from Methanothermobacter thermautotrophicus (strain ATCC 29096 / DSM 1053 / JCM 10044 / NBRC 100330 / Delta H) (Methanobacterium thermoautotrophicum).